The sequence spans 262 residues: Polyamine aminopropyltransferase (262 aa).

The region spanning 1 to 249 (MWITQEITPY…DIHRAAFALP (249 aa)) is the PABS domain. N29 provides a ligand contact to S-methyl-5'-thioadenosine. D83 serves as a coordination point for spermidine. The active-site Proton acceptor is the D155.

Homodimer.

The protein localises to the cytoplasm. The enzyme catalyses S-adenosyl 3-(methylsulfanyl)propylamine + putrescine = S-methyl-5'-thioadenosine + spermidine + H(+). Its pathway is amine and polyamine biosynthesis; spermidine biosynthesis; spermidine from putrescine: step 1/1. Its activity is regulated as follows. Inhibited by methylglyoxal bis(cyclopentylamidinohydrazone)(MGBCP). Involved in the cell growth and proliferation. Catalyzes the irreversible transfer of a propylamine group from the amino donor S-adenosylmethioninamine (decarboxy-AdoMet) to putrescine (1,4-diaminobutane) to yield spermidine. Spermidine cannot be used as an aminopropyl acceptor. This chain is Polyamine aminopropyltransferase, found in Helicobacter pylori (strain ATCC 700392 / 26695) (Campylobacter pylori).